We begin with the raw amino-acid sequence, 91 residues long: Putative septation protein SpoVG (91 aa).

Belongs to the SpoVG family.

Could be involved in septation. This chain is Putative septation protein SpoVG, found in Caldanaerobacter subterraneus subsp. tengcongensis (strain DSM 15242 / JCM 11007 / NBRC 100824 / MB4) (Thermoanaerobacter tengcongensis).